Reading from the N-terminus, the 399-residue chain is Glutathione-independent formaldehyde dehydrogenase (399 aa).

Cys-47 lines the Zn(2+) pocket. NAD(+) contacts are provided by Gly-48, Ser-49, and His-52. Zn(2+) contacts are provided by His-68, Cys-98, Cys-101, Cys-104, Cys-112, and Asp-170. NAD(+)-binding residues include Val-198, Asp-218, Arg-223, Val-263, Arg-268, Pro-300, Gln-338, and Thr-339.

It belongs to the zinc-containing alcohol dehydrogenase family. In terms of assembly, homotetramer. Zn(2+) is required as a cofactor.

It catalyses the reaction formaldehyde + NAD(+) + H2O = formate + NADH + 2 H(+). The enzyme catalyses acetaldehyde + NAD(+) + H2O = acetate + NADH + 2 H(+). Dehydrogenase that catalyzes the NAD(+)-dependent oxidation of formaldehyde and acetaldehyde. Shows no detectable activity against either aldehydes with longer carbon chains or ethanol. The protein is Glutathione-independent formaldehyde dehydrogenase of Pseudomonas aeruginosa (strain LESB58).